Consider the following 299-residue polypeptide: tRNA dimethylallyltransferase (299 aa).

Position 11 to 18 (11 to 18 (GPTAVGKT)) interacts with ATP. 13 to 18 (TAVGKT) serves as a coordination point for substrate. The interaction with substrate tRNA stretch occupies residues 36–39 (DSQQ).

Belongs to the IPP transferase family. In terms of assembly, monomer. It depends on Mg(2+) as a cofactor.

The catalysed reaction is adenosine(37) in tRNA + dimethylallyl diphosphate = N(6)-dimethylallyladenosine(37) in tRNA + diphosphate. Its function is as follows. Catalyzes the transfer of a dimethylallyl group onto the adenine at position 37 in tRNAs that read codons beginning with uridine, leading to the formation of N6-(dimethylallyl)adenosine (i(6)A). The chain is tRNA dimethylallyltransferase from Streptococcus pyogenes serotype M12 (strain MGAS2096).